Here is a 416-residue protein sequence, read N- to C-terminus: Mitochondrial inner membrane i-AAA protease complex subunit MGR1 (416 aa).

The interval 1–28 (MAVFTPPSGNSNSTDHTHTQDDHDKDDN) is disordered. Residues 1 to 56 (MAVFTPPSGNSNSTDHTHTQDDHDKDDNDIKKFYIRPSLGLKLWGPLVPAPDNLPG) are Mitochondrial intermembrane-facing. The segment covering 15 to 28 (DHTHTQDDHDKDDN) has biased composition (basic and acidic residues). Residues 57–73 (LYTLITIQSAVGFFALW) traverse the membrane as a helical segment. The Mitochondrial matrix portion of the chain corresponds to 74-151 (RLRRLYKLPP…RQSRFVSVRK (78 aa)). A helical transmembrane segment spans residues 152 to 169 (LLWGLFGSLLLSQSLLEL). The Mitochondrial intermembrane segment spans residues 170–416 (TRLNFLKYDP…PKALTNEKTH (247 aa)). The span at 390 to 400 (SHTKTPTSTDQ) shows a compositional bias: polar residues. Positions 390-416 (SHTKTPTSTDQPLPGPTPKALTNEKTH) are disordered.

The protein belongs to the MGR1 family. Component of the mitochondrial inner membrane i-AAA protease complex composed of at least MRG1 and YME1. Interacts directly with YME1.

Its subcellular location is the mitochondrion inner membrane. In terms of biological role, component of the mitochondrial inner membrane i-AAA protease complex required for mitochondrial inner membrane protein turnover. Required for growth of cells lacking the mitochondrial genome. The sequence is that of Mitochondrial inner membrane i-AAA protease complex subunit MGR1 (MGR1) from Saccharomyces cerevisiae (strain YJM789) (Baker's yeast).